Here is an 860-residue protein sequence, read N- to C-terminus: Nuclear pore complex protein NUP93B (860 aa).

This sequence belongs to the nucleoporin interacting component (NIC) family. Part of the nuclear pore complex (NPC). The NPC has an eight-fold symmetrical structure comprising a central transport channel and two rings, the cytoplasmic and nuclear rings, to which eight filaments are attached. The cytoplasmic filaments have loose ends, while the nuclear filaments are joined in a distal ring, forming a nuclear basket. NPCs are highly dynamic in configuration and composition, and can be devided in 3 subcomplexes, the NUP62 subcomplex, the NUP107-160 subcomplex and the NUP93 subcomplex, containing approximately 30 different nucleoporin proteins.

The protein localises to the nucleus envelope. It is found in the nucleus. The protein resides in the nuclear pore complex. This Arabidopsis thaliana (Mouse-ear cress) protein is Nuclear pore complex protein NUP93B.